A 117-amino-acid polypeptide reads, in one-letter code: Hydrogenase maturation factor HypA (117 aa).

Ni(2+) is bound at residue H2. Residues C73, C76, C89, and C92 each coordinate Zn(2+).

Belongs to the HypA/HybF family.

Involved in the maturation of [NiFe] hydrogenases. Required for nickel insertion into the metal center of the hydrogenase. This Shewanella baltica (strain OS195) protein is Hydrogenase maturation factor HypA.